Reading from the N-terminus, the 710-residue chain is E3 ubiquitin-protein ligase TRIM9 (710 aa).

The segment at 10 to 50 (CPVCGSFYREPIILPCSHNLCQACARNILVQTPESESPQSH) adopts an RING-type zinc-finger fold. At Thr41 the chain carries Phosphothreonine. Phosphoserine occurs at positions 44, 46, and 49. 2 consecutive B box-type zinc fingers follow at residues 163–212 (AAAL…LVPP) and 224–266 (RKVS…VKAL). Zn(2+) is bound by residues Cys168, Cys171, Cys193, His198, Cys229, His232, Cys252, and His258. The stretch at 273-340 (HKSQLSQALN…KAQLLARVNK (68 aa)) forms a coiled coil. The COS domain occupies 374–432 (IKENDPSGFLQISDALIRRVHLTEDQWGKGTLTPRMTTDFDLSLDNSPLLQSIHQLDFV). Residues 440 to 535 (VPATPILQLE…KTLVLQTSEV (96 aa)) enclose the Fibronectin type-III domain. A B30.2/SPRY domain is found at 533-702 (SEVAWFAFDP…LHTGLPVPDF (170 aa)).

The protein belongs to the TRIM/RBCC family. Interacts with SNAP25. In terms of processing, auto-ubiquitinated. Poly-ubiquitinated in cultured cells, whereas it is monoubiquitinated in vitro. Brain. Highly expressed in the cerebral cortex (at protein level). Severely decreased in the affected brain areas in Parkinson disease and dementia with Lewy bodies.

It localises to the cytoplasm. The protein resides in the cell projection. Its subcellular location is the dendrite. It is found in the cytoplasmic vesicle. The protein localises to the secretory vesicle. It localises to the synaptic vesicle. The protein resides in the synapse. Its subcellular location is the cytoskeleton. It carries out the reaction S-ubiquitinyl-[E2 ubiquitin-conjugating enzyme]-L-cysteine + [acceptor protein]-L-lysine = [E2 ubiquitin-conjugating enzyme]-L-cysteine + N(6)-ubiquitinyl-[acceptor protein]-L-lysine.. Its pathway is protein modification; protein ubiquitination. Functionally, E3 ubiquitin-protein ligase which ubiquitinates itself in cooperation with an E2 enzyme UBE2D2/UBC4 and serves as a targeting signal for proteasomal degradation. May play a role in regulation of neuronal functions and may also participate in the formation or breakdown of abnormal inclusions in neurodegenerative disorders. May act as a regulator of synaptic vesicle exocytosis by controlling the availability of SNAP25 for the SNARE complex formation. In Homo sapiens (Human), this protein is E3 ubiquitin-protein ligase TRIM9 (TRIM9).